Here is a 198-residue protein sequence, read N- to C-terminus: Calcium channel flower (198 aa).

3 helical membrane passes run 36 to 56 (LGIVAAFFAILFGLWNVLSII), 67 to 89 (IIQMIAGFIVMVLEAPCCFVCIE), and 114 to 134 (AVPPIFMCFGLASLFGSGLIF).

Belongs to the calcium channel flower family. In terms of assembly, homomultimer. Associates with the dally/ magu complex.

The protein localises to the cell membrane. The protein resides in the cytoplasmic vesicle. It is found in the secretory vesicle. Its subcellular location is the synaptic vesicle membrane. It localises to the presynaptic cell membrane. The protein localises to the endosome. Channel activity is inhibited by La(3+), which reduces Ca(2+) influx and thus inhibits it's function in promoting activity-dependent bulk endocytosis (ADBE) in response to high stimuli. Transmembrane protein which mediates synaptic endocytosis, fitness-based cell culling, neuronal culling, morphogen gradient scaling, and calcium transport. Regulates synaptic endocytosis and hence couples exo- with endocytosis. Controls two major modes of synaptic vesicle (SV) endocytosis in the synaptic boutons of neuromuscular junctions (NMJs); Ca(2+) channel-independent Clathrin-mediated endocytosis (CME) in response to mild stimulation, and Ca(2+) channel-dependent activity-dependent bulk endocytosis (ADBE) in response to strong stimulation. Functions in ADBE and subsequent SV reformation from bulk endosomes by initiating Ca(2+) channel-dependent phosphatidylinositol 4,5-bisphosphate (PtdIns(4,5)P2) compartmentalization in synaptic boutons. There it acts at the periactive zone to provide the low Ca(2+) levels required to initiate Calcineurin activation and upregulate PtdIns(4,5)P2. Conversely PtdIns(4,5)P2 enhances fwe Ca(2+) channel-activity, establishing a positive feedback loop that induces PtdIns(4,5)P2 microdomain at the periactive zone. These microdomains trigger bulk membrane invagination (i.e. ADBE) by triggering actin polymerization while also promoting localization of fwe to bulk endosomes, thereby removing the ADBE trigger to reduce endocytosis and prevent excess membrane uptake. PtdIns(4,5)P2 then promotes SV reformation from the bulk endosomes, to coordinate ADBE and subsequent SV reformation. Different combinations of the flower isoforms at the cell membrane are also required for the identification and elimination of suboptimal or supernumerary cells during development, regeneration, and adulthood. Required for the recognition and elimination of unfit cells in the developing wing during cell competition. In the developing pupal retina, mediates the elimination of unwanted postmitotic neurons, including supernumerary photoreceptor neurons that form at the periphery of the retina and are contained within incomplete ommatidia units. Also required for efficient elimination and replacement of old neurons by newly generated neurons during regeneration in the adult brain following mechanical injury. Downstream of the flower fitness fingerprints, cells identified as unwanted or unfit are eliminated via apoptosis through the expression of ahuizotl (azot). However, the cells marked for elimination by the flower isoforms only undergo apoptosis if additional thresholds are met; (1) their neighboring fit/healthy cells express different levels of the fwe isoforms, and (2) the levels of the protective signal SPARC expressed by the loser or unwanted cells are unable to inhibit caspase activation. These additional thresholds for flower-mediated apoptosis, allows useful cells to recover from transient and limited stress before they are unnecessarily eliminated. Functions with dally and magu in a mechanism of scaling, which utilises apoptosis to ensure that the dpp morphogen gradient, which mediates organ growth, remains proportional to the size of the growing wing. In this mechanism, fwe represses dally- and Magu-dependent activity in expanding the gradient, and dally/Magu inhibits fwe-dependent apoptosis to keep cell death rate low. When the levels of these different proteins are optimally regulated the gradient correctly scales with organ growth but when this fails, fwe-mediated apoptosis is activated to trim the developing tissue to match the correct size of the gradient. In Drosophila persimilis (Fruit fly), this protein is Calcium channel flower.